The following is a 105-amino-acid chain: Cysteine-rich venom protein VAR2 (105 aa).

The N-terminal stretch at 1 to 22 is a signal peptide; sequence MILLKLYLTLAAILCQSRGTTS.

It belongs to the CRISP family. In terms of processing, contains 8 disulfide bonds. In terms of tissue distribution, expressed by the venom gland.

It is found in the secreted. In terms of biological role, blocks ryanodine receptors, and potassium channels. In Varanus acanthurus (Ridge-tailed monitor), this protein is Cysteine-rich venom protein VAR2.